Here is a 234-residue protein sequence, read N- to C-terminus: Immune-associated nucleotide-binding protein 2 (234 aa).

An AIG1-type G domain is found at 21-223; the sequence is KPVKNIVLVG…YTEDMYRNIK (203 aa). GTP is bound by residues 30 to 38, Ser51, and Asn183; that span reads GRSVNGICT.

It belongs to the TRAFAC class TrmE-Era-EngA-EngB-Septin-like GTPase superfamily. AIG1/Toc34/Toc159-like paraseptin GTPase family. IAN subfamily. In terms of tissue distribution, mostly expressed in pollen. Also detected in lateral roots and radicles.

This Arabidopsis thaliana (Mouse-ear cress) protein is Immune-associated nucleotide-binding protein 2.